The primary structure comprises 385 residues: Exopolygalacturonase rpg15 (385 aa).

The signal sequence occupies residues 1–26; the sequence is MVRFISFTSPIAALLLLSFGVKHAST. Residues Asn143, Asn161, Asn164, and Asn180 are each glycosylated (N-linked (GlcNAc...) asparagine). 4 PbH1 repeats span residues 165–195, 196–217, 219–241, and 249–270; these read STNL…DLYH, SSGI…AIKE, VEKV…GSLG, and VKHV…RVKT. Asp210 (proton donor) is an active-site residue. Cys212 and Cys229 form a disulfide bridge. A glycan (N-linked (GlcNAc...) asparagine) is linked at Asn226. His233 is a catalytic residue. 3 N-linked (GlcNAc...) asparagine glycosylation sites follow: Asn256, Asn319, and Asn343. Cys344 and Cys350 are disulfide-bonded. One copy of the PbH1 5 repeat lies at 350-376; sequence CSDITFSGIDITKASNTTDNVCVYLEG. The N-linked (GlcNAc...) asparagine glycan is linked to Asn365.

Belongs to the glycosyl hydrolase 28 family. In terms of processing, N-glycosylated.

It localises to the secreted. It carries out the reaction [(1-&gt;4)-alpha-D-galacturonosyl](n) + H2O = alpha-D-galacturonate + [(1-&gt;4)-alpha-D-galacturonosyl](n-1). In terms of biological role, specific in hydrolyzing the terminal glycosidic bond of polygalacturonic acid and oligogalacturonates. The chain is Exopolygalacturonase rpg15 from Rhizopus delemar (strain RA 99-880 / ATCC MYA-4621 / FGSC 9543 / NRRL 43880) (Mucormycosis agent).